Here is a 249-residue protein sequence, read N- to C-terminus: Metallo-beta-lactamase type 2 (249 aa).

A signal peptide spans 1–22; it reads MMKKMKWALVLALGLTGLNAFG. Zn(2+) contacts are provided by His-98, His-100, Asp-102, His-161, and Cys-180. A substrate-binding site is contributed by Lys-183. His-222 contributes to the Zn(2+) binding site.

The protein belongs to the metallo-beta-lactamase superfamily. Class-B beta-lactamase family. Monomer. Zn(2+) is required as a cofactor.

It localises to the periplasm. It catalyses the reaction a beta-lactam + H2O = a substituted beta-amino acid. Its function is as follows. Confers resistance to the different beta-lactams antibiotics (penicillin, cephalosporin and carbapenem) via the hydrolysis of the beta-lactam ring. The polypeptide is Metallo-beta-lactamase type 2 (blaB4) (Elizabethkingia meningoseptica (Chryseobacterium meningosepticum)).